Here is a 157-residue protein sequence, read N- to C-terminus: Transcription elongation factor GreA (157 aa).

Belongs to the GreA/GreB family.

Functionally, necessary for efficient RNA polymerase transcription elongation past template-encoded arresting sites. The arresting sites in DNA have the property of trapping a certain fraction of elongating RNA polymerases that pass through, resulting in locked ternary complexes. Cleavage of the nascent transcript by cleavage factors such as GreA or GreB allows the resumption of elongation from the new 3'terminus. GreA releases sequences of 2 to 3 nucleotides. The polypeptide is Transcription elongation factor GreA (Phenylobacterium zucineum (strain HLK1)).